Reading from the N-terminus, the 836-residue chain is General vesicular transport factor p115 (836 aa).

The tract at residues 1–22 (MEFLKSGIKTVLGSTEPGQQPS) is disordered. Polar residues predominate over residues 12–22 (LGSTEPGQQPS). ARM repeat units follow at residues 24 to 64 (AETV…VGAQ), 65 to 124 (GMPP…IKTP), 126 to 166 (HVTL…LILV), 169 to 210 (MGVS…VAFE), 211 to 256 (NAFD…FKEG), 316 to 359 (RLLH…LGRV), 368 to 413 (PAIV…QTLL), 424 to 463 (STGQ…EELL), 477 to 518 (TLLE…KALL), 523 to 577 (TMAY…IIKR), and 579 to 636 (GQES…LVSG). 2 coiled-coil regions span residues 663-707 (IIRG…DQNT) and 744-806 (NMYF…EEAG). Positions 803–836 (EEAGSTNTLPTSNVAPSVPAAGGGSPIPSGTASR) are disordered. Over residues 806 to 816 (GSTNTLPTSNV) the composition is skewed to polar residues. Low complexity predominate over residues 817 to 836 (APSVPAAGGGSPIPSGTASR).

This sequence belongs to the VDP/USO1/EDE1 family.

Its subcellular location is the cytoplasm. It is found in the golgi apparatus. It localises to the golgi stack. The protein localises to the golgi stack membrane. The protein resides in the endoplasmic reticulum. Its subcellular location is the endoplasmic reticulum membrane. Essential for maintaining the architecture of the Golgi stacks and for normal organization of the transitional endoplasmic reticulum (tER). Required for both the formation of the Golgi stacks and the maintenance of the individual cisternae. This chain is General vesicular transport factor p115, found in Drosophila melanogaster (Fruit fly).